A 1036-amino-acid polypeptide reads, in one-letter code: Zinc finger protein 532 (1036 aa).

4 disordered regions span residues 26–92 (PKAA…LHNG), 106–206 (GAKS…EAES), 220–265 (RKAE…PSSK), and 281–362 (AASD…KVRI). Residues 32–52 (SGHDDHESHIKQNAHVDDDSH) are compositionally biased toward basic and acidic residues. 3 positions are modified to phosphoserine: Ser-130, Ser-133, and Ser-134. Acidic residues predominate over residues 136 to 151 (EEFEDDEKIEVDDPPD). Lys-175 is modified (N6-acetyllysine). Polar residues predominate over residues 182–193 (ENSSKTGVSTSG). Basic and acidic residues-rich tracts occupy residues 194–205 (HTDKNKVKREAE) and 220–249 (RKAE…EKSD). Positions 253–265 (AAAASSKTKPSSK) are enriched in low complexity. The segment covering 302–314 (EVNDSPKAADKSP) has biased composition (basic and acidic residues). Phosphoserine occurs at positions 306 and 313. Over residues 336–353 (SVSSENSSKGSPSSPVGS) the composition is skewed to low complexity. At Ser-433 the chain carries Phosphoserine. Residues Lys-458 and Lys-515 each participate in a glycyl lysine isopeptide (Lys-Gly) (interchain with G-Cter in SUMO2) cross-link. A C2H2-type 1; degenerate zinc finger spans residues 615–634 (YKCLECGDAFALEKSLSQHY). The C2H2-type 2; degenerate zinc finger occupies 751 to 775 (LKCLECNEVFQDEPSLATHFQHAAD). The segment at 784–807 (HPCRQCDKSFSSSHSLCRHNRIKH) adopts a C2H2-type 3 zinc-finger fold. The segment at 814-840 (YACSHCPDSRRTFTKRLMLERHIQLMH) adopts a C2H2-type 4; degenerate zinc-finger fold. The tract at residues 847–877 (VKELSDDAGDVTNDEEEEAEIKEDAKVPSPK) is disordered. The segment covering 852 to 867 (DDAGDVTNDEEEEAEI) has biased composition (acidic residues). The segment covering 868–877 (KEDAKVPSPK) has biased composition (basic and acidic residues). Residue Ser-875 is modified to Phosphoserine. Residues Lys-879 and Lys-902 each participate in a glycyl lysine isopeptide (Lys-Gly) (interchain with G-Cter in SUMO2) cross-link. 2 consecutive C2H2-type zinc fingers follow at residues 938 to 961 (HQCR…FIVH) and 999 to 1021 (RKCK…MRTH). A disordered region spans residues 966–1000 (PQPVSKQNGAGEDSQQENKPSPEDEAAEGAASDRK).

The protein belongs to the krueppel C2H2-type zinc-finger protein family.

It localises to the nucleus. In terms of biological role, may be involved in transcriptional regulation. This is Zinc finger protein 532 (Znf532) from Mus musculus (Mouse).